Here is a 281-residue protein sequence, read N- to C-terminus: Pantothenate synthetase (281 aa).

30 to 37 provides a ligand contact to ATP; the sequence is MGNLHQGH. H37 (proton donor) is an active-site residue. A (R)-pantoate-binding site is contributed by Q61. Beta-alanine is bound at residue Q61. 149–152 lines the ATP pocket; it reads GNKD. Q155 contacts (R)-pantoate. ATP contacts are provided by residues I178 and 186-189; that span reads MSSR.

Belongs to the pantothenate synthetase family. As to quaternary structure, homodimer.

The protein localises to the cytoplasm. It carries out the reaction (R)-pantoate + beta-alanine + ATP = (R)-pantothenate + AMP + diphosphate + H(+). Its pathway is cofactor biosynthesis; (R)-pantothenate biosynthesis; (R)-pantothenate from (R)-pantoate and beta-alanine: step 1/1. Its function is as follows. Catalyzes the condensation of pantoate with beta-alanine in an ATP-dependent reaction via a pantoyl-adenylate intermediate. The protein is Pantothenate synthetase of Shewanella oneidensis (strain ATCC 700550 / JCM 31522 / CIP 106686 / LMG 19005 / NCIMB 14063 / MR-1).